The chain runs to 368 residues: Transmembrane protein 26 (368 aa).

A run of 3 helical transmembrane segments spans residues 4-24, 36-56, and 65-85; these read LVFL…LVGV, YWLL…TLKF, and FSPA…LLEL. Asn110 carries N-linked (GlcNAc...) asparagine glycosylation. A run of 5 helical transmembrane segments spans residues 150 to 170, 177 to 197, 208 to 228, 257 to 277, and 281 to 301; these read QTFL…GGIT, LLLM…ETLE, VYAI…DLAV, IGIS…ILMT, and VINQ…VLQL. The disordered stretch occupies residues 324-368; sequence GEHGCRAQTSESGPSQRDWQNESKEGLAIPLRGSPVTSDDSHHTP. Positions 330 to 341 are enriched in polar residues; that stretch reads AQTSESGPSQRD.

It is found in the membrane. The chain is Transmembrane protein 26 (TMEM26) from Homo sapiens (Human).